Consider the following 487-residue polypeptide: Cytochrome P450 2C5 (487 aa).

Residue cysteine 432 participates in heme binding.

Belongs to the cytochrome P450 family. Requires heme as cofactor.

The protein localises to the endoplasmic reticulum membrane. The protein resides in the microsome membrane. The catalysed reaction is an organic molecule + reduced [NADPH--hemoprotein reductase] + O2 = an alcohol + oxidized [NADPH--hemoprotein reductase] + H2O + H(+). Functionally, cytochromes P450 are a group of heme-thiolate monooxygenases. In liver microsomes, this enzyme is involved in an NADPH-dependent electron transport pathway. It oxidizes a variety of structurally unrelated compounds, including steroids, fatty acids, and xenobiotics. This is Cytochrome P450 2C5 (CYP2C5) from Oryctolagus cuniculus (Rabbit).